The following is a 945-amino-acid chain: LPS-assembly protein LptD (945 aa).

Positions 1 to 33 are cleaved as a signal peptide; that stretch reads MALKSPAFRKKFPLLVTGSLLALQPLATSFVVA. The disordered stretch occupies residues 56–98; it reads AQLPPRPVHDANSVSSSVATAADATGEEASGDKSKLVTEAKGR. Low complexity predominate over residues 65 to 79; the sequence is DANSVSSSVATAADA. The span at 85-98 shows a compositional bias: basic and acidic residues; sequence SGDKSKLVTEAKGR.

It belongs to the LptD family. In terms of assembly, component of the lipopolysaccharide transport and assembly complex. Interacts with LptE and LptA.

The protein localises to the cell outer membrane. Functionally, together with LptE, is involved in the assembly of lipopolysaccharide (LPS) at the surface of the outer membrane. In Pseudomonas fluorescens (strain ATCC BAA-477 / NRRL B-23932 / Pf-5), this protein is LPS-assembly protein LptD.